The following is a 378-amino-acid chain: Polar flagellin B/D (378 aa).

Coiled-coil stretches lie at residues 103-128 and 311-340; these read SNSK…RIAE and AFQN…IKDT.

This sequence belongs to the bacterial flagellin family. In terms of assembly, heteromer of multiple flagellin subunits including FlaA, FlaB/D, FlaC, FlaE and FlaF.

The protein localises to the secreted. It is found in the bacterial flagellum. Flagellin is the subunit protein which polymerizes to form the filaments of bacterial flagella. FlaB/D is not essential for polar flagellar synthesis and swimming motility. Homomer of FlaB/D is not able to form a functional filament. The sequence is that of Polar flagellin B/D (flaB) from Vibrio parahaemolyticus serotype O3:K6 (strain RIMD 2210633).